The primary structure comprises 126 residues: Protein VraC (126 aa).

The protein is Protein VraC of Staphylococcus haemolyticus (strain JCSC1435).